Consider the following 354-residue polypeptide: Uroporphyrinogen decarboxylase (354 aa).

Residues 27 to 31 (RQAGR), D77, Y154, S209, and H327 contribute to the substrate site.

Belongs to the uroporphyrinogen decarboxylase family. Homodimer.

It localises to the cytoplasm. It carries out the reaction uroporphyrinogen III + 4 H(+) = coproporphyrinogen III + 4 CO2. It functions in the pathway porphyrin-containing compound metabolism; protoporphyrin-IX biosynthesis; coproporphyrinogen-III from 5-aminolevulinate: step 4/4. Its function is as follows. Catalyzes the decarboxylation of four acetate groups of uroporphyrinogen-III to yield coproporphyrinogen-III. This Pseudomonas savastanoi pv. phaseolicola (strain 1448A / Race 6) (Pseudomonas syringae pv. phaseolicola (strain 1448A / Race 6)) protein is Uroporphyrinogen decarboxylase.